Reading from the N-terminus, the 3068-residue chain is Genome polyprotein (3068 aa).

The Peptidase S30 domain occupies 144-287 (TFRDGHMNKF…MATVTHMEQY (144 aa)). Residues His-195, Asp-204, and Ser-238 each act as for P1 proteinase activity in the active site. The Involved in interaction with stylet and aphid transmission signature appears at 337 to 340 (KLTC). The Involved in virions binding and aphid transmission motif lies at 595–597 (PTK). A Peptidase C6 domain is found at 621–743 (LYIALDGYCY…ESEIKHYRVG (123 aa)). Active-site for helper component proteinase activity residues include Cys-629 and His-702. Positions 1228-1380 (DISISSERDF…TQFPVKLVVE (153 aa)) constitute a Helicase ATP-binding domain. Residue 1241 to 1248 (GAVGSGKS) coordinates ATP. The DECH box motif lies at 1330–1333 (DECH). Residues 1399–1558 (DMIQYGNNLL…NLPVMSSGVS (160 aa)) form the Helicase C-terminal domain. The Nuclear localization signal signature appears at 1884–1891 (KKGKGKGT). Tyr-1906 is modified (O-(5'-phospho-RNA)-tyrosine). The Peptidase C4 domain occupies 2031 to 2249 (AKTLMRGLRD…VLWGPLQLTK (219 aa)). Catalysis depends on for nuclear inclusion protein A activity residues His-2076, Asp-2111, and Cys-2181. In terms of domain architecture, RdRp catalytic spans 2518–2642 (WIYCDADGSQ…AVNPERESLL (125 aa)). The disordered stretch occupies residues 2796–2833 (SSSRSDTLDAGEEKKKNKEVATVSDGMGKKEVESTRDS). The segment covering 2822–2833 (MGKKEVESTRDS) has biased composition (basic and acidic residues). At Thr-3051 the chain carries Phosphothreonine.

The protein belongs to the potyviridae genome polyprotein family. In terms of assembly, interacts with host eIF4E protein (via cap-binding region); this interaction mediates the translation of the VPg-viral RNA conjugates. Part of a complex that comprises VPg, RNA, host EIF4E and EIF4G; this interaction mediates the translation of the VPg-viral RNA conjugates. VPg is uridylylated by the polymerase and is covalently attached to the 5'-end of the genomic RNA. This uridylylated form acts as a nucleotide-peptide primer for the polymerase. In terms of processing, potyviral RNA is expressed as two polyproteins which undergo post-translational proteolytic processing. Genome polyprotein is processed by NIa-pro, P1 and HC-pro proteinases resulting in the production of at least ten individual proteins. P3N-PIPO polyprotein is cleaved by P1 and HC-pro proteinases resulting in the production of three individual proteins. The P1 proteinase and the HC-pro cleave only their respective C-termini autocatalytically. 6K1 is essential for proper proteolytic separation of P3 from CI.

Its subcellular location is the host cytoplasmic vesicle. The protein resides in the host nucleus. The protein localises to the virion. The catalysed reaction is RNA(n) + a ribonucleoside 5'-triphosphate = RNA(n+1) + diphosphate. It carries out the reaction Hydrolyzes glutaminyl bonds, and activity is further restricted by preferences for the amino acids in P6 - P1' that vary with the species of potyvirus, e.g. Glu-Xaa-Xaa-Tyr-Xaa-Gln-|-(Ser or Gly) for the enzyme from tobacco etch virus. The natural substrate is the viral polyprotein, but other proteins and oligopeptides containing the appropriate consensus sequence are also cleaved.. It catalyses the reaction Hydrolyzes a Gly-|-Gly bond at its own C-terminus, commonly in the sequence -Tyr-Xaa-Val-Gly-|-Gly, in the processing of the potyviral polyprotein.. In terms of biological role, required for aphid transmission and also has proteolytic activity. Only cleaves a Gly-Gly dipeptide at its own C-terminus. Interacts with virions and aphid stylets. Acts as a suppressor of RNA-mediated gene silencing, also known as post-transcriptional gene silencing (PTGS), a mechanism of plant viral defense that limits the accumulation of viral RNAs. May have RNA-binding activity. Functionally, has helicase activity. It may be involved in replication. Its function is as follows. Indispensable for virus replication. Reduces the abundance of host transcripts related to jasmonic acid biosynthesis therefore altering the host defenses. In order to increase its own stability, decreases host protein degradation pathways. Indispensable for virus replication. In terms of biological role, mediates the cap-independent, EIF4E-dependent translation of viral genomic RNAs. Binds to the cap-binding site of host EIF4E and thus interferes with the host EIF4E-dependent mRNA export and translation. VPg-RNA directly binds EIF4E and is a template for transcription. Also forms trimeric complexes with EIF4E-EIF4G, which are templates for translation. Functionally, has RNA-binding and proteolytic activities. Its function is as follows. An RNA-dependent RNA polymerase that plays an essential role in the virus replication. Involved in aphid transmission, cell-to-cell and systemis movement, encapsidation of the viral RNA and in the regulation of viral RNA amplification. This is Genome polyprotein from Pepper mottle virus (isolate California) (PeMV).